The sequence spans 362 residues: Phospho-N-acetylmuramoyl-pentapeptide-transferase (362 aa).

Helical transmembrane passes span valine 27–tryptophan 47, threonine 73–leucine 93, tyrosine 97–tryptophan 117, tryptophan 132–alanine 152, leucine 160–leucine 180, glycine 200–alanine 220, alanine 237–phenylalanine 257, valine 264–valine 284, isoleucine 289–valine 309, and glutamine 339–leucine 359.

Belongs to the glycosyltransferase 4 family. MraY subfamily. It depends on Mg(2+) as a cofactor.

It is found in the cell inner membrane. The enzyme catalyses UDP-N-acetyl-alpha-D-muramoyl-L-alanyl-gamma-D-glutamyl-meso-2,6-diaminopimeloyl-D-alanyl-D-alanine + di-trans,octa-cis-undecaprenyl phosphate = di-trans,octa-cis-undecaprenyl diphospho-N-acetyl-alpha-D-muramoyl-L-alanyl-D-glutamyl-meso-2,6-diaminopimeloyl-D-alanyl-D-alanine + UMP. It participates in cell wall biogenesis; peptidoglycan biosynthesis. In terms of biological role, catalyzes the initial step of the lipid cycle reactions in the biosynthesis of the cell wall peptidoglycan: transfers peptidoglycan precursor phospho-MurNAc-pentapeptide from UDP-MurNAc-pentapeptide onto the lipid carrier undecaprenyl phosphate, yielding undecaprenyl-pyrophosphoryl-MurNAc-pentapeptide, known as lipid I. The protein is Phospho-N-acetylmuramoyl-pentapeptide-transferase of Aromatoleum aromaticum (strain DSM 19018 / LMG 30748 / EbN1) (Azoarcus sp. (strain EbN1)).